Reading from the N-terminus, the 631-residue chain is Chaperone protein DnaK (631 aa).

Residue T198 is modified to Phosphothreonine; by autocatalysis. Residues 602–631 (EAAGGAQQAGKDDVVDAEFTEVDDDKKKSA) form a disordered region.

It belongs to the heat shock protein 70 family.

Acts as a chaperone. This Rhodopseudomonas palustris (strain ATCC BAA-98 / CGA009) protein is Chaperone protein DnaK.